Reading from the N-terminus, the 102-residue chain is MAIKHDDGTVLMRQEQKLKPPSMYQVLLLNDDYTPMEFVVLILQEYFSKDRETATQIMLMVHRDGKGICGVYPKDIASTKVELVLNHARKAGHPLQCVMEEV.

The protein belongs to the ClpS family. As to quaternary structure, binds to the N-terminal domain of the chaperone ClpA.

In terms of biological role, involved in the modulation of the specificity of the ClpAP-mediated ATP-dependent protein degradation. This Janthinobacterium sp. (strain Marseille) (Minibacterium massiliensis) protein is ATP-dependent Clp protease adapter protein ClpS.